We begin with the raw amino-acid sequence, 1400 residues long: DNA-directed RNA polymerase subunit beta' (1400 aa).

The Zn(2+) site is built by C71, C73, C86, and C89. Residues D462, D464, and D466 each contribute to the Mg(2+) site. C811, C885, C892, and C895 together coordinate Zn(2+).

Belongs to the RNA polymerase beta' chain family. In terms of assembly, the RNAP catalytic core consists of 2 alpha, 1 beta, 1 beta' and 1 omega subunit. When a sigma factor is associated with the core the holoenzyme is formed, which can initiate transcription. The cofactor is Mg(2+). Zn(2+) serves as cofactor.

The enzyme catalyses RNA(n) + a ribonucleoside 5'-triphosphate = RNA(n+1) + diphosphate. Its function is as follows. DNA-dependent RNA polymerase catalyzes the transcription of DNA into RNA using the four ribonucleoside triphosphates as substrates. In Brucella anthropi (strain ATCC 49188 / DSM 6882 / CCUG 24695 / JCM 21032 / LMG 3331 / NBRC 15819 / NCTC 12168 / Alc 37) (Ochrobactrum anthropi), this protein is DNA-directed RNA polymerase subunit beta'.